We begin with the raw amino-acid sequence, 440 residues long: Protein ABHD8 (440 aa).

The disordered stretch occupies residues 123–158 (DPAGSDGRSAPGSGSGSGSGSGSGGRRRRARRPKRT). Residues 124-134 (PAGSDGRSAPG) show a composition bias toward low complexity. A compositionally biased stretch (gly residues) spans 135–146 (SGSGSGSGSGSG). The span at 147 to 158 (GRRRRARRPKRT) shows a compositional bias: basic residues. The AB hydrolase-1 domain occupies 178 to 280 (VLFFIHGVGG…HKVIMINGGG (103 aa)). Active-site charge relay system residues include serine 253, aspartate 371, and histidine 399.

This sequence belongs to the AB hydrolase superfamily. In terms of assembly, interacts with NLRP3 (via NACHT and LLR domains); this interaction is enhanced in the presence of NLRP3 inflammasome inducers, such as ATP, nigericin, silica, or alum. Interacts with ZDHHC12.

It is found in the cytoplasm. Its function is as follows. Negatively regulates NLRP3-driven inflammation. Promotes NLRP3 degradation through the chaperone-mediated autophagy (CMA) pathway, hence attenuating inflammasome activation and IL1B secretion. Acts by recruiting palmitoyltransferase ZDHHC12 to NLRP3, facilitating NLRP3 palmitoylation and subsequent degradation. This chain is Protein ABHD8, found in Macaca fascicularis (Crab-eating macaque).